The primary structure comprises 117 residues: Large ribosomal subunit protein uL18 (117 aa).

The segment covering 1 to 17 (MNLSRNKARKVKQKRLR) has biased composition (basic residues). Residues 1–23 (MNLSRNKARKVKQKRLRAKSELS) form a disordered region.

Belongs to the universal ribosomal protein uL18 family. As to quaternary structure, part of the 50S ribosomal subunit; part of the 5S rRNA/L5/L18/L25 subcomplex. Contacts the 5S and 23S rRNAs.

Functionally, this is one of the proteins that bind and probably mediate the attachment of the 5S RNA into the large ribosomal subunit, where it forms part of the central protuberance. The polypeptide is Large ribosomal subunit protein uL18 (Mycoplasmopsis synoviae (strain 53) (Mycoplasma synoviae)).